The following is a 720-amino-acid chain: Polyribonucleotide nucleotidyltransferase (720 aa).

Mg(2+) contacts are provided by Asp-487 and Asp-493. The KH domain maps to 554 to 613 (PRIETFKIPTDKIREVIGTGGKVIREIVEKTGAKINIEDDGTVKVASNDGEAMKAAIKWI). Residues 623–691 (GQIYEGTVVK…DRGKTRLSMK (69 aa)) form the S1 motif domain. Residues 691–720 (KAVDQQTGEDLEAAGHKAEKADAPREAAGE) are disordered. A compositionally biased stretch (basic and acidic residues) spans 703 to 720 (AAGHKAEKADAPREAAGE).

This sequence belongs to the polyribonucleotide nucleotidyltransferase family. The cofactor is Mg(2+).

The protein localises to the cytoplasm. It catalyses the reaction RNA(n+1) + phosphate = RNA(n) + a ribonucleoside 5'-diphosphate. Involved in mRNA degradation. Catalyzes the phosphorolysis of single-stranded polyribonucleotides processively in the 3'- to 5'-direction. The sequence is that of Polyribonucleotide nucleotidyltransferase from Nitrobacter hamburgensis (strain DSM 10229 / NCIMB 13809 / X14).